Reading from the N-terminus, the 378-residue chain is N-acetyldiaminopimelate deacetylase (378 aa).

The active site involves Asp65. The Proton acceptor role is filled by Glu124.

The protein belongs to the peptidase M20A family. N-acetyldiaminopimelate deacetylase subfamily.

It carries out the reaction N-acetyl-(2S,6S)-2,6-diaminopimelate + H2O = (2S,6S)-2,6-diaminopimelate + acetate. The protein operates within amino-acid biosynthesis; L-lysine biosynthesis via DAP pathway; LL-2,6-diaminopimelate from (S)-tetrahydrodipicolinate (acetylase route): step 3/3. Its function is as follows. Catalyzes the conversion of N-acetyl-diaminopimelate to diaminopimelate and acetate. This chain is N-acetyldiaminopimelate deacetylase, found in Anoxybacillus flavithermus (strain DSM 21510 / WK1).